The chain runs to 213 residues: Imidazole glycerol phosphate synthase subunit HisH (213 aa).

Positions 6–213 (LVTVIDYGMG…FKNFLNWNGQ (208 aa)) constitute a Glutamine amidotransferase type-1 domain. The active-site Nucleophile is cysteine 86. Catalysis depends on residues histidine 192 and glutamate 194.

In terms of assembly, heterodimer of HisH and HisF.

The protein resides in the cytoplasm. It catalyses the reaction 5-[(5-phospho-1-deoxy-D-ribulos-1-ylimino)methylamino]-1-(5-phospho-beta-D-ribosyl)imidazole-4-carboxamide + L-glutamine = D-erythro-1-(imidazol-4-yl)glycerol 3-phosphate + 5-amino-1-(5-phospho-beta-D-ribosyl)imidazole-4-carboxamide + L-glutamate + H(+). It carries out the reaction L-glutamine + H2O = L-glutamate + NH4(+). It functions in the pathway amino-acid biosynthesis; L-histidine biosynthesis; L-histidine from 5-phospho-alpha-D-ribose 1-diphosphate: step 5/9. IGPS catalyzes the conversion of PRFAR and glutamine to IGP, AICAR and glutamate. The HisH subunit catalyzes the hydrolysis of glutamine to glutamate and ammonia as part of the synthesis of IGP and AICAR. The resulting ammonia molecule is channeled to the active site of HisF. The chain is Imidazole glycerol phosphate synthase subunit HisH from Hydrogenovibrio crunogenus (strain DSM 25203 / XCL-2) (Thiomicrospira crunogena).